The following is a 324-amino-acid chain: Acetyl-coenzyme A carboxylase carboxyl transferase subunit alpha (324 aa).

The CoA carboxyltransferase C-terminal domain maps to 37-291; that stretch reads ILEEKLENLE…DLMIQKTFQQ (255 aa).

It belongs to the AccA family. In terms of assembly, acetyl-CoA carboxylase is a heterohexamer composed of biotin carboxyl carrier protein (AccB), biotin carboxylase (AccC) and two subunits each of ACCase subunit alpha (AccA) and ACCase subunit beta (AccD).

It localises to the cytoplasm. It catalyses the reaction N(6)-carboxybiotinyl-L-lysyl-[protein] + acetyl-CoA = N(6)-biotinyl-L-lysyl-[protein] + malonyl-CoA. It participates in lipid metabolism; malonyl-CoA biosynthesis; malonyl-CoA from acetyl-CoA: step 1/1. In terms of biological role, component of the acetyl coenzyme A carboxylase (ACC) complex. First, biotin carboxylase catalyzes the carboxylation of biotin on its carrier protein (BCCP) and then the CO(2) group is transferred by the carboxyltransferase to acetyl-CoA to form malonyl-CoA. This Bacillus cereus (strain ATCC 14579 / DSM 31 / CCUG 7414 / JCM 2152 / NBRC 15305 / NCIMB 9373 / NCTC 2599 / NRRL B-3711) protein is Acetyl-coenzyme A carboxylase carboxyl transferase subunit alpha.